Consider the following 140-residue polypeptide: Large ribosomal subunit protein bL21 (140 aa).

The tract at residues 106 to 140 is disordered; it reads SGVKPAVGARTKIEPAVKPAKAKKSEAEASAEDAN.

The protein belongs to the bacterial ribosomal protein bL21 family. In terms of assembly, part of the 50S ribosomal subunit. Contacts protein L20.

Its function is as follows. This protein binds to 23S rRNA in the presence of protein L20. This is Large ribosomal subunit protein bL21 from Paracoccus denitrificans (strain Pd 1222).